We begin with the raw amino-acid sequence, 1046 residues long: Protein HBT1 (1046 aa).

Disordered regions lie at residues 1–455 (MNMN…AAEK), 469–894 (DYQQ…LGGA), and 908–1046 (PSLI…RSEI). Ser41 carries the post-translational modification Phosphoserine. The span at 81 to 96 (KDSETPHEDTEADANR) shows a compositional bias: basic and acidic residues. Composition is skewed to polar residues over residues 98–149 (ANVT…SPPT), 175–191 (IATT…TSPV), and 228–301 (ANTG…NTDS). Residue Ser303 is modified to Phosphoserine. Residues 327–341 (VYTSTGPKSNVSSGM) show a composition bias toward polar residues. The residue at position 363 (Ser363) is a Phosphoserine. Polar residues-rich tracts occupy residues 389-408 (QTGL…QQTM) and 420-429 (GFVSQQPSYH). Residues 430 to 455 (DSNKNIQHPEKNKVDNKNISERAAEK) show a composition bias toward basic and acidic residues. Over residues 488–498 (YSSSAGKNKNL) the composition is skewed to polar residues. Ser491 is modified (phosphoserine). The segment covering 529–538 (GHMKYNDNGR) has biased composition (basic and acidic residues). Residues 548-559 (QAGSQNTNNNID) are compositionally biased toward polar residues. Ser561 carries the phosphoserine modification. Polar residues predominate over residues 570–582 (GLSNDATTRNNVV). A compositionally biased stretch (basic and acidic residues) spans 586–597 (MKDEDMNEDSTK). The span at 605–619 (YLDDVEDYHENDIDD) shows a compositional bias: acidic residues. Positions 621–630 (SNAKKNDLYS) are enriched in basic and acidic residues. Position 671 is a phosphoserine (Ser671). A compositionally biased stretch (polar residues) spans 742-756 (FTNNPETGTTGNVDT). Over residues 773 to 782 (DDSKNTDTHL) the composition is skewed to basic and acidic residues. Polar residues-rich tracts occupy residues 792-802 (NSRSGDTTYSK) and 837-855 (SSEQ…NQEY). Tyr855 carries the phosphotyrosine modification. Ser857 carries the phosphoserine modification. Positions 868–890 (KVLEEDAPGYKREVDLKNKRRTD) are enriched in basic and acidic residues. A compositionally biased stretch (polar residues) spans 922-951 (DTNTSSSQKPSEGTYPETTSYSIHNETTSQ). The segment covering 952 to 963 (GRKVSVGSMGSG) has biased composition (low complexity). Positions 964-976 (KSKHHHNHHRHSR) are enriched in basic residues. Ser1005 is modified (phosphoserine). Positions 1006 to 1019 (DEGEQDYHDDEQGE) are enriched in acidic residues. Ser1034 bears the Phosphoserine mark.

As to quaternary structure, conjugated with HUB1. HUB1 has not the classical C-terminal Gly residue, so it is still unknown how conjugation may occur.

The protein resides in the cytoplasm. In terms of biological role, polarity-determining protein which forms a conjugate with the ubiquitin-like modifier HUB1. Involved in bud site selection and cellular morphogenesis during conjugation. Required for survival during stationary phase. This Saccharomyces cerevisiae (strain ATCC 204508 / S288c) (Baker's yeast) protein is Protein HBT1 (HBT1).